We begin with the raw amino-acid sequence, 198 residues long: Nucleoside triphosphate pyrophosphatase (198 aa).

The active-site Proton acceptor is Asp-72.

The protein belongs to the Maf family. A divalent metal cation is required as a cofactor.

Its subcellular location is the cytoplasm. It carries out the reaction a ribonucleoside 5'-triphosphate + H2O = a ribonucleoside 5'-phosphate + diphosphate + H(+). The catalysed reaction is a 2'-deoxyribonucleoside 5'-triphosphate + H2O = a 2'-deoxyribonucleoside 5'-phosphate + diphosphate + H(+). Functionally, nucleoside triphosphate pyrophosphatase. May have a dual role in cell division arrest and in preventing the incorporation of modified nucleotides into cellular nucleic acids. In Acinetobacter baylyi (strain ATCC 33305 / BD413 / ADP1), this protein is Nucleoside triphosphate pyrophosphatase.